The chain runs to 29 residues: uncharacterized protein (29 aa).

A disordered region spans residues 1–29; it reads MFKMKFGDTLPRSDFGTGGNKQAPGLELG.

This is an uncharacterized protein from Saccharomyces cerevisiae (strain ATCC 204508 / S288c) (Baker's yeast).